Here is a 419-residue protein sequence, read N- to C-terminus: Glutamate dehydrogenase (419 aa).

Lys-105 is an active-site residue. 219–225 (GYGNAGY) is a binding site for NAD(+).

It belongs to the Glu/Leu/Phe/Val dehydrogenases family. As to quaternary structure, homohexamer.

The enzyme catalyses L-glutamate + NAD(+) + H2O = 2-oxoglutarate + NH4(+) + NADH + H(+). It carries out the reaction L-glutamate + NADP(+) + H2O = 2-oxoglutarate + NH4(+) + NADPH + H(+). The protein is Glutamate dehydrogenase (gdhA) of Thermococcus profundus.